A 524-amino-acid polypeptide reads, in one-letter code: Bifunctional purine biosynthesis protein PurH (524 aa).

Residues 1 to 145 (MIQQALLSVS…KNHRDVTVIV (145 aa)) form the MGS-like domain.

It belongs to the PurH family.

It carries out the reaction (6R)-10-formyltetrahydrofolate + 5-amino-1-(5-phospho-beta-D-ribosyl)imidazole-4-carboxamide = 5-formamido-1-(5-phospho-D-ribosyl)imidazole-4-carboxamide + (6S)-5,6,7,8-tetrahydrofolate. It catalyses the reaction IMP + H2O = 5-formamido-1-(5-phospho-D-ribosyl)imidazole-4-carboxamide. Its pathway is purine metabolism; IMP biosynthesis via de novo pathway; 5-formamido-1-(5-phospho-D-ribosyl)imidazole-4-carboxamide from 5-amino-1-(5-phospho-D-ribosyl)imidazole-4-carboxamide (10-formyl THF route): step 1/1. It participates in purine metabolism; IMP biosynthesis via de novo pathway; IMP from 5-formamido-1-(5-phospho-D-ribosyl)imidazole-4-carboxamide: step 1/1. This chain is Bifunctional purine biosynthesis protein PurH, found in Ralstonia nicotianae (strain ATCC BAA-1114 / GMI1000) (Ralstonia solanacearum).